A 613-amino-acid chain; its full sequence is tRNA 5-methylaminomethyl-2-thiouridine biosynthesis bifunctional protein MnmC (613 aa).

The interval M1–E225 is tRNA (mnm(5)s(2)U34)-methyltransferase. The interval I252–L613 is FAD-dependent cmnm(5)s(2)U34 oxidoreductase.

In the N-terminal section; belongs to the methyltransferase superfamily. tRNA (mnm(5)s(2)U34)-methyltransferase family. This sequence in the C-terminal section; belongs to the DAO family. The cofactor is FAD.

It localises to the cytoplasm. The catalysed reaction is 5-aminomethyl-2-thiouridine(34) in tRNA + S-adenosyl-L-methionine = 5-methylaminomethyl-2-thiouridine(34) in tRNA + S-adenosyl-L-homocysteine + H(+). Its function is as follows. Catalyzes the last two steps in the biosynthesis of 5-methylaminomethyl-2-thiouridine (mnm(5)s(2)U) at the wobble position (U34) in tRNA. Catalyzes the FAD-dependent demodification of cmnm(5)s(2)U34 to nm(5)s(2)U34, followed by the transfer of a methyl group from S-adenosyl-L-methionine to nm(5)s(2)U34, to form mnm(5)s(2)U34. This is tRNA 5-methylaminomethyl-2-thiouridine biosynthesis bifunctional protein MnmC from Campylobacter jejuni subsp. jejuni serotype O:2 (strain ATCC 700819 / NCTC 11168).